The primary structure comprises 694 residues: DNA ligase (694 aa).

Residues 41–45 (DAEFD), 91–92 (SL), and glutamate 121 each bind NAD(+). Lysine 123 (N6-AMP-lysine intermediate) is an active-site residue. NAD(+) is bound by residues arginine 144, glutamate 184, lysine 300, and lysine 324. Zn(2+) is bound by residues cysteine 418, cysteine 421, cysteine 437, and cysteine 443. In terms of domain architecture, BRCT spans 607 to 694 (SVLPTCEGLT…QGPPVQQVVD (88 aa)).

This sequence belongs to the NAD-dependent DNA ligase family. LigA subfamily. Mg(2+) is required as a cofactor. The cofactor is Mn(2+).

The catalysed reaction is NAD(+) + (deoxyribonucleotide)n-3'-hydroxyl + 5'-phospho-(deoxyribonucleotide)m = (deoxyribonucleotide)n+m + AMP + beta-nicotinamide D-nucleotide.. In terms of biological role, DNA ligase that catalyzes the formation of phosphodiester linkages between 5'-phosphoryl and 3'-hydroxyl groups in double-stranded DNA using NAD as a coenzyme and as the energy source for the reaction. It is essential for DNA replication and repair of damaged DNA. The protein is DNA ligase of Mycobacterium leprae (strain TN).